The chain runs to 161 residues: Urease accessory protein UreE (161 aa).

Positions 133–161 are disordered; the sequence is EPEAGAYQSAPHSHSHAHDHPFVRLPAHS.

Belongs to the UreE family.

It localises to the cytoplasm. Involved in urease metallocenter assembly. Binds nickel. Probably functions as a nickel donor during metallocenter assembly. In Pseudomonas putida (strain W619), this protein is Urease accessory protein UreE.